Consider the following 278-residue polypeptide: Transmembrane protein 41B (278 aa).

The disordered stretch occupies residues 1–31 (MQVHERSHTGGHTFQCNHGNEKKAPAAGKVH). A run of 6 helical transmembrane segments spans residues 39–59 (MSLL…FLVY), 96–116 (FYVE…TFAI), 142–162 (CSGL…RPVV), 184–204 (LINY…FINI), 212–232 (PLKV…FVAI), and 249–269 (SWNS…PAIF). A VTT domain; required for its function in autophagy region spans residues 127–238 (GFLYPFPLAL…FVAIKAGTTL (112 aa)).

It belongs to the TMEM41 family.

The protein resides in the endoplasmic reticulum membrane. The protein localises to the endomembrane system. It catalyses the reaction a 1,2-diacyl-sn-glycero-3-phospho-L-serine(in) = a 1,2-diacyl-sn-glycero-3-phospho-L-serine(out). The catalysed reaction is cholesterol(in) = cholesterol(out). It carries out the reaction a 1,2-diacyl-sn-glycero-3-phosphocholine(in) = a 1,2-diacyl-sn-glycero-3-phosphocholine(out). The enzyme catalyses a 1,2-diacyl-sn-glycero-3-phosphoethanolamine(in) = a 1,2-diacyl-sn-glycero-3-phosphoethanolamine(out). In terms of biological role, phospholipid scramblase involved in lipid homeostasis and membrane dynamics processes. Has phospholipid scramblase activity toward cholesterol and phosphatidylserine, as well as phosphatidylethanolamine and phosphatidylcholine. Required for autophagosome formation: participates in early stages of autophagosome biogenesis at the endoplasmic reticulum (ER) membrane by reequilibrating the leaflets of the ER as lipids are extracted by atg2 (atg2a or atg2b) to mediate autophagosome assembly. In addition to autophagy, involved in other processes in which phospholipid scramblase activity is required. Required for normal motor neuron development. The polypeptide is Transmembrane protein 41B (Xenopus laevis (African clawed frog)).